The following is a 262-amino-acid chain: MNSSFSAPAKKSLGQHFLADRYYIDRIVQAVDPRPGQHLVEIGPGQGAITFPLLRKHGALTVIEFDRDLIAPLTDAAAPIGQLQIIHRDVLAVDFTAVADGTPIRLVGNLPYNISSPILFHALDHASAVADMHFMLQKEVVDRMAAGPGSKVYGRLSVMLQAYCEVTALFVVPPGAFRPPPKVDSAVVRLVPRDAASVLIKDRKRFADVVRAGFGQRRKTLRNALSTVCEPAHFEAAGVRPDARAEQLEVADFIRLANVELA.

S-adenosyl-L-methionine contacts are provided by His16, Leu18, Gly43, Glu64, Asp89, and Asn109.

The protein belongs to the class I-like SAM-binding methyltransferase superfamily. rRNA adenine N(6)-methyltransferase family. RsmA subfamily.

The protein resides in the cytoplasm. It carries out the reaction adenosine(1518)/adenosine(1519) in 16S rRNA + 4 S-adenosyl-L-methionine = N(6)-dimethyladenosine(1518)/N(6)-dimethyladenosine(1519) in 16S rRNA + 4 S-adenosyl-L-homocysteine + 4 H(+). In terms of biological role, specifically dimethylates two adjacent adenosines (A1518 and A1519) in the loop of a conserved hairpin near the 3'-end of 16S rRNA in the 30S particle. May play a critical role in biogenesis of 30S subunits. In Xanthomonas campestris pv. campestris (strain B100), this protein is Ribosomal RNA small subunit methyltransferase A.